The sequence spans 109 residues: ATPase inhibitor mai-2, mitochondrial (109 aa).

Disordered regions lie at residues 18–39 (FSAG…SIRD) and 73–109 (EEVK…LGKE). Over residues 21–35 (GGHGDGAGRGGGSGG) the composition is skewed to gly residues. A coiled-coil region spans residues 55-109 (YFYKKQKAQLQELREHIQEEVKHHEGQLENHKKVLERHQQRISEIEAQERALGKE).

It belongs to the ATPase inhibitor family.

Its subcellular location is the mitochondrion. Functionally, thought to be a regulatory component of the ATP-synthesizing complex in the mitochondria. Activity is pH dependent. The protein is ATPase inhibitor mai-2, mitochondrial (mai-2) of Caenorhabditis elegans.